A 156-amino-acid chain; its full sequence is Small ribosomal subunit protein uS7 (156 aa).

The protein belongs to the universal ribosomal protein uS7 family. In terms of assembly, part of the 30S ribosomal subunit. Contacts proteins S9 and S11.

Its function is as follows. One of the primary rRNA binding proteins, it binds directly to 16S rRNA where it nucleates assembly of the head domain of the 30S subunit. Is located at the subunit interface close to the decoding center, probably blocks exit of the E-site tRNA. This is Small ribosomal subunit protein uS7 from Vibrio campbellii (strain ATCC BAA-1116).